Consider the following 288-residue polypeptide: N-acetylneuraminate lyase (288 aa).

Aceneuramate is bound by residues serine 44 and threonine 45. Residue tyrosine 133 is the Proton donor of the active site. Lysine 161 acts as the Schiff-base intermediate with substrate in catalysis. Threonine 163, glycine 185, aspartate 187, glutamate 188, and serine 204 together coordinate aceneuramate.

This sequence belongs to the DapA family. NanA subfamily. Homotetramer.

It is found in the cytoplasm. It carries out the reaction aceneuramate = aldehydo-N-acetyl-D-mannosamine + pyruvate. It participates in amino-sugar metabolism; N-acetylneuraminate degradation; D-fructose 6-phosphate from N-acetylneuraminate: step 1/5. Functionally, catalyzes the reversible aldol cleavage of N-acetylneuraminic acid (sialic acid; Neu5Ac) to form pyruvate and N-acetylmannosamine (ManNAc) via a Schiff base intermediate. This chain is N-acetylneuraminate lyase, found in Clostridium perfringens (strain SM101 / Type A).